The sequence spans 344 residues: Centromere protein N (344 aa).

This sequence belongs to the CENP-N/CHL4 family.

The protein localises to the nucleus. It localises to the chromosome. Its subcellular location is the centromere. Its function is as follows. Probable component of a centromeric complex involved in assembly of kinetochore proteins, mitotic progression and chromosome segregation. The sequence is that of Centromere protein N (CENPN) from Gallus gallus (Chicken).